A 500-amino-acid polypeptide reads, in one-letter code: Plasma protease C1 inhibitor (500 aa).

The signal sequence occupies residues 1–22 (MASRLTLLTLLLLLLAGDRASS). Residues 20 to 31 (ASSNPNATSSSS) are compositionally biased toward low complexity. The segment at 20–43 (ASSNPNATSSSSQDPESLQDRGEG) is disordered. Residue N25 is glycosylated (N-linked (GlcNAc...) (complex) asparagine). T47 and T48 each carry an O-linked (GalNAc...) threonine glycan. A glycan (O-linked (GalNAc...) serine) is linked at S64. The segment at 65–118 (LPTTNSTTNSATKITANTTDEPTTQPTTEPTTQPTIQPTQPTTQLPTDSPTQPT) is disordered. Positions 67 to 118 (TTNSTTNSATKITANTTDEPTTQPTTEPTTQPTIQPTQPTTQLPTDSPTQPT) are enriched in low complexity. N-linked (GlcNAc...) asparagine glycosylation occurs at N69. Residue T71 is glycosylated (O-linked (GalNAc...) threonine). N81 is a glycosylation site (N-linked (GlcNAc...) asparagine). O-linked (GalNAc...) threonine glycans are attached at residues T83, T88, T92, and T96. 7 repeat units span residues 85–88 (EPTT), 89–92 (QPTT), 93–96 (EPTT), 97–100 (QPTI), 101–104 (QPTQ), 105–108 (PTTQ), and 116–119 (QPTT). Residues 85-119 (EPTTQPTTEPTTQPTIQPTQPTTQLPTDSPTQPTT) form a 7 X 4 AA tandem repeats of [QE]-P-T-[TQ] region. 2 disulfides stabilise this stretch: C123-C428 and C130-C205. N-linked (GlcNAc...) (complex) asparagine glycans are attached at residues N238 and N253. An N-linked (GlcNAc...) asparagine; in variant TA glycan is attached at N272. N352 carries an N-linked (GlcNAc...) (complex) asparagine glycan.

It belongs to the serpin family. In terms of assembly, interacts with MASP1. (Microbial infection) Binds to E.coli stcE which allows localization of SERPING1 to cell membranes thus protecting the bacteria against complement-mediated lysis. Highly glycosylated (49%) with N- and O-glycosylation. O-glycosylated with core 1 or possibly core 8 glycans. N-glycan heterogeneity at Asn-25: Hex5HexNAc4 (minor), dHex1Hex5HexNAc4 (minor), Hex6HexNAc5 (major) and dHex1Hex6HexNAc5 (minor). In terms of processing, cleaved by C1S in vitro. Post-translationally, (Microbial infection) Can be proteolytically cleaved by E.coli stcE.

It localises to the secreted. Functionally, serine protease inhibitor, which acrs as a regulator of the classical complement pathway. Forms a proteolytically inactive stoichiometric complex with the C1r or C1s proteases. May also regulate blood coagulation, fibrinolysis and the generation of kinins. Very efficient inhibitor of FXIIa. Inhibits chymotrypsin and kallikrein. This chain is Plasma protease C1 inhibitor (SERPING1), found in Homo sapiens (Human).